Reading from the N-terminus, the 875-residue chain is Alanine--tRNA ligase (875 aa).

Zn(2+) is bound by residues His564, His568, Cys666, and His670.

Belongs to the class-II aminoacyl-tRNA synthetase family. In terms of assembly, homotetramer. Zn(2+) serves as cofactor.

The protein localises to the cytoplasm. The enzyme catalyses tRNA(Ala) + L-alanine + ATP = L-alanyl-tRNA(Ala) + AMP + diphosphate. Catalyzes the attachment of alanine to tRNA(Ala) in a two-step reaction: alanine is first activated by ATP to form Ala-AMP and then transferred to the acceptor end of tRNA(Ala). Also edits incorrectly charged Ser-tRNA(Ala) and Gly-tRNA(Ala) via its editing domain. The polypeptide is Alanine--tRNA ligase (Yersinia pestis bv. Antiqua (strain Angola)).